The primary structure comprises 193 residues: 2',3'-cyclic-nucleotide 3'-phosphodiesterase (193 aa).

The active-site Proton donor/acceptor is histidine 40. Threonine 42 contributes to the substrate binding site. Histidine 129 functions as the Proton donor/acceptor in the catalytic mechanism. Serine 131 and tyrosine 134 together coordinate substrate.

This sequence belongs to the 2H phosphoesterase superfamily. CPD1 family.

The protein resides in the golgi apparatus. It catalyses the reaction a nucleoside 2',3'-cyclic phosphate + H2O = a nucleoside 2'-phosphate + H(+). Its function is as follows. Involved in the metabolism of ADP-ribose 1',2'-cyclic phosphate which is produced as a consequence of tRNA splicing. The polypeptide is 2',3'-cyclic-nucleotide 3'-phosphodiesterase (CPD1) (Phaeosphaeria nodorum (strain SN15 / ATCC MYA-4574 / FGSC 10173) (Glume blotch fungus)).